Here is a 175-residue protein sequence, read N- to C-terminus: Small ribosomal subunit protein uS5 (175 aa).

The S5 DRBM domain maps to 19 to 82; the sequence is WVDRLVSVNR…DDAKKNVIRV (64 aa).

It belongs to the universal ribosomal protein uS5 family. In terms of assembly, part of the 30S ribosomal subunit. Contacts proteins S4 and S8.

In terms of biological role, with S4 and S12 plays an important role in translational accuracy. Functionally, located at the back of the 30S subunit body where it stabilizes the conformation of the head with respect to the body. This is Small ribosomal subunit protein uS5 from Salinibacter ruber (strain DSM 13855 / M31).